Reading from the N-terminus, the 499-residue chain is Bifunctional purine biosynthesis protein PurH (499 aa).

Residues 1 to 144 (MINRALISVY…KNFKDVIVVT (144 aa)) form the MGS-like domain.

It belongs to the PurH family.

The catalysed reaction is (6R)-10-formyltetrahydrofolate + 5-amino-1-(5-phospho-beta-D-ribosyl)imidazole-4-carboxamide = 5-formamido-1-(5-phospho-D-ribosyl)imidazole-4-carboxamide + (6S)-5,6,7,8-tetrahydrofolate. It catalyses the reaction IMP + H2O = 5-formamido-1-(5-phospho-D-ribosyl)imidazole-4-carboxamide. It functions in the pathway purine metabolism; IMP biosynthesis via de novo pathway; 5-formamido-1-(5-phospho-D-ribosyl)imidazole-4-carboxamide from 5-amino-1-(5-phospho-D-ribosyl)imidazole-4-carboxamide (10-formyl THF route): step 1/1. It participates in purine metabolism; IMP biosynthesis via de novo pathway; IMP from 5-formamido-1-(5-phospho-D-ribosyl)imidazole-4-carboxamide: step 1/1. This is Bifunctional purine biosynthesis protein PurH from Clostridium kluyveri (strain NBRC 12016).